The chain runs to 256 residues: Small ribosomal subunit protein eS1 (256 aa).

Ala-2 carries the post-translational modification N-acetylalanine; partial.

The protein belongs to the eukaryotic ribosomal protein eS1 family. Component of the small ribosomal subunit. Mature ribosomes consist of a small (40S) and a large (60S) subunit. The 40S subunit contains about 33 different proteins and 1 molecule of RNA (18S). The 60S subunit contains about 49 different proteins and 3 molecules of RNA (25S, 5.8S and 5S).

It is found in the cytoplasm. The chain is Small ribosomal subunit protein eS1 from Coprinopsis cinerea (strain Okayama-7 / 130 / ATCC MYA-4618 / FGSC 9003) (Inky cap fungus).